A 221-amino-acid chain; its full sequence is SIN3-HDAC complex-associated factor (221 aa).

Disordered regions lie at residues 110–153 (KLQK…ASSS) and 201–221 (AAAE…TQEW). Residues 111 to 121 (LQKEFKRHNSD) are compositionally biased toward basic and acidic residues. Residues 124–135 (STTSSASPAQSP) are compositionally biased toward low complexity. The span at 136–153 (CYSNQSDEGSDTEMASSS) shows a compositional bias: polar residues.

The protein belongs to the SINHCAF family. In terms of assembly, component of the Sin3/HDAC corepressor complex at least composed of BRMS1, BRMS1L, ING2, SAP30, SAP30L, HDAC1. Found in a complex composed of at least SINHCAF, SIN3A, HDAC1, SAP30, RBBP4, OGT and TET1. Interacts with SIN3A and OGT. Embryonic stem cells (at protein level).

The protein localises to the nucleus. Functionally, subunit of the Sin3 deacetylase complex (Sin3/HDAC), this subunit is important for the repression of genes encoding components of the TGF-beta signaling pathway. Core component of a SIN3A complex (composed of at least SINHCAF, SIN3A, HDAC1, SAP30, RBBP4, OGT and TET1) present in embryonic stem (ES) cells. Promotes the stability of SIN3A and its presence on chromatin and is essential for maintaining the potential of ES cells to proliferate rapidly, while ensuring a short G1-phase of the cell cycle, thereby preventing premature lineage priming. The polypeptide is SIN3-HDAC complex-associated factor (Sinhcaf) (Mus musculus (Mouse)).